The sequence spans 290 residues: Nucleoid occlusion protein (290 aa).

The segment at residues 153 to 172 (EALAQRLGKGQSTIANKLRL) is a DNA-binding region (H-T-H motif).

It belongs to the ParB family.

It localises to the cytoplasm. The protein localises to the nucleoid. Functionally, effects nucleoid occlusion by binding relatively nonspecifically to DNA and preventing the assembly of the division machinery in the vicinity of the nucleoid, especially under conditions that disturb the cell cycle. It helps to coordinate cell division and chromosome segregation by preventing the formation of the Z ring through the nucleoid, which would cause chromosome breakage. The protein is Nucleoid occlusion protein of Bacillus cereus (strain ATCC 10987 / NRS 248).